Reading from the N-terminus, the 250-residue chain is Putative (5-formylfuran-3-yl)methyl phosphate synthase (250 aa).

Lys29 serves as the catalytic Schiff-base intermediate with substrate. The Proton acceptor role is filled by Lys87.

It belongs to the MfnB family.

It carries out the reaction 2 D-glyceraldehyde 3-phosphate = 4-(hydroxymethyl)-2-furancarboxaldehyde phosphate + phosphate + 2 H2O. Catalyzes the formation of 4-(hydroxymethyl)-2-furancarboxaldehyde phosphate (4-HFC-P) from two molecules of glyceraldehyde-3-P (GA-3-P). This is Putative (5-formylfuran-3-yl)methyl phosphate synthase from Streptomyces griseus subsp. griseus (strain JCM 4626 / CBS 651.72 / NBRC 13350 / KCC S-0626 / ISP 5235).